Consider the following 41-residue polypeptide: Photosystem I reaction center subunit IX (41 aa).

The chain crosses the membrane as a helical span at residues 7 to 27 (YLSTAPVLTLVSLTAVAGLLI).

It belongs to the PsaJ family.

The protein localises to the plastid. The protein resides in the chloroplast thylakoid membrane. Functionally, may help in the organization of the PsaE and PsaF subunits. The polypeptide is Photosystem I reaction center subunit IX (Chlorella vulgaris (Green alga)).